The sequence spans 315 residues: Aspartate carbamoyltransferase catalytic subunit (315 aa).

R64 and T65 together coordinate carbamoyl phosphate. Residue K92 participates in L-aspartate binding. The carbamoyl phosphate site is built by R114, H142, and Q145. The L-aspartate site is built by R175 and R229. 2 residues coordinate carbamoyl phosphate: G270 and P271.

Belongs to the aspartate/ornithine carbamoyltransferase superfamily. ATCase family. As to quaternary structure, heterododecamer (2C3:3R2) of six catalytic PyrB chains organized as two trimers (C3), and six regulatory PyrI chains organized as three dimers (R2).

The catalysed reaction is carbamoyl phosphate + L-aspartate = N-carbamoyl-L-aspartate + phosphate + H(+). The protein operates within pyrimidine metabolism; UMP biosynthesis via de novo pathway; (S)-dihydroorotate from bicarbonate: step 2/3. Functionally, catalyzes the condensation of carbamoyl phosphate and aspartate to form carbamoyl aspartate and inorganic phosphate, the committed step in the de novo pyrimidine nucleotide biosynthesis pathway. This is Aspartate carbamoyltransferase catalytic subunit from Bradyrhizobium diazoefficiens (strain JCM 10833 / BCRC 13528 / IAM 13628 / NBRC 14792 / USDA 110).